The sequence spans 320 residues: MSAGGEHLKDEGTRRQVVLAGGIAGLVSRFCVAPLDVVKIRLQLQIHSLSDPSSHRNVSGPIYKGTISTMRAIIREEGITGLWKGNIPAELMYVCYGGVQFTTYRTTTQALAQLPHRLPQPVESFVAGASAGGLATAATYPLDLLRTRFAAQGTERVYTSLLASVRDIARIEGPAGFFRGCSAAVGQIVPYMGLFFATYESLRPSLATVQDLPFGSGDALAGMIASVLAKTGVFPLDLVRKRLQVQGPTRSRYIHRNIPEYRGVFNTLALILRTQGVRGLYRGLTVSLFKAAPASAVTMWTYEETLRALQAMEVAAQKDE.

Solcar repeat units lie at residues 12 to 110, 119 to 205, and 213 to 308; these read GTRR…TTQA, PQPV…LRPS, and PFGS…TLRA. 6 helical membrane passes run 17 to 35, 91 to 107, 125 to 145, 180 to 197, 219 to 239, and 283 to 300; these read VVLAGGIAGLVSRFCVAPL, LMYVCYGGVQFTTYRTT, FVAGASAGGLATAATYPLDLL, GCSAAVGQIVPYMGLFFA, ALAGMIASVLAKTGVFPLDLV, and GLTVSLFKAAPASAVTMW.

The protein belongs to the mitochondrial carrier (TC 2.A.29) family.

The protein resides in the mitochondrion inner membrane. Functionally, mitochondrial transporter that mediates uptake of thiamine pyrophosphate (ThPP) into mitochondria. This Aspergillus terreus (strain NIH 2624 / FGSC A1156) protein is Mitochondrial thiamine pyrophosphate carrier 1 (tpc1).